A 217-amino-acid chain; its full sequence is tRNA (guanine-N(7)-)-methyltransferase (217 aa).

Glutamate 46, glutamate 71, aspartate 98, and aspartate 120 together coordinate S-adenosyl-L-methionine. Aspartate 120 is an active-site residue. Residue lysine 124 coordinates substrate. The tract at residues 126 to 131 (RHEKRR) is interaction with RNA. Substrate-binding positions include aspartate 156 and 196–199 (TEYE).

Belongs to the class I-like SAM-binding methyltransferase superfamily. TrmB family.

It carries out the reaction guanosine(46) in tRNA + S-adenosyl-L-methionine = N(7)-methylguanosine(46) in tRNA + S-adenosyl-L-homocysteine. It participates in tRNA modification; N(7)-methylguanine-tRNA biosynthesis. Functionally, catalyzes the formation of N(7)-methylguanine at position 46 (m7G46) in tRNA. The polypeptide is tRNA (guanine-N(7)-)-methyltransferase (Lactobacillus gasseri (strain ATCC 33323 / DSM 20243 / BCRC 14619 / CIP 102991 / JCM 1131 / KCTC 3163 / NCIMB 11718 / NCTC 13722 / AM63)).